A 661-amino-acid polypeptide reads, in one-letter code: Cyclic di-GMP phosphodiesterase PdeR (661 aa).

Residues 109–179 form the PAS domain; that stretch reads GLSFAEQVVS…RRNNRVFFRS (71 aa). One can recognise a GGDEF domain in the interval 265–397; it reads NKVGVVYLDL…GRGQFCVFTP (133 aa). The EAL domain maps to 406 to 658; it reads YLWLDTNLRK…AFERWYKRYL (253 aa).

In terms of assembly, interacts with DgcM and MlrA.

It carries out the reaction 3',3'-c-di-GMP + H2O = 5'-phosphoguanylyl(3'-&gt;5')guanosine + H(+). Functionally, part of a signaling cascade that regulates curli biosynthesis. The cascade is composed of two cyclic-di-GMP (c-di-GMP) control modules, in which c-di-GMP controlled by the DgcE/PdeH pair (module I) regulates the activity of the DgcM/PdeR pair (module II), which in turn regulates activity of the transcription factor MlrA and expression of the master biofilm regulator csgD. PdeR acts as a trigger enzyme that connects modules I and II. It inhibits DgcM and MlrA by direct interaction. Inhibition is relieved when PdeR binds and degrades c-di-GMP generated by module I. The protein is Cyclic di-GMP phosphodiesterase PdeR of Escherichia coli (strain K12).